Consider the following 421-residue polypeptide: Gamma-glutamyl phosphate reductase (421 aa).

The protein belongs to the gamma-glutamyl phosphate reductase family.

The protein localises to the cytoplasm. It carries out the reaction L-glutamate 5-semialdehyde + phosphate + NADP(+) = L-glutamyl 5-phosphate + NADPH + H(+). Its pathway is amino-acid biosynthesis; L-proline biosynthesis; L-glutamate 5-semialdehyde from L-glutamate: step 2/2. Functionally, catalyzes the NADPH-dependent reduction of L-glutamate 5-phosphate into L-glutamate 5-semialdehyde and phosphate. The product spontaneously undergoes cyclization to form 1-pyrroline-5-carboxylate. This Brucella suis biovar 1 (strain 1330) protein is Gamma-glutamyl phosphate reductase.